Reading from the N-terminus, the 461-residue chain is Arginine biosynthesis bifunctional protein ArgJ, chloroplastic (461 aa).

Residues T202, K228, T239, E326, N456, and T461 each coordinate substrate. T239 (nucleophile) is an active-site residue.

It belongs to the ArgJ family. Heterodimer of an alpha and a beta chain.

The protein resides in the plastid. It localises to the chloroplast. The catalysed reaction is N(2)-acetyl-L-ornithine + L-glutamate = N-acetyl-L-glutamate + L-ornithine. It carries out the reaction L-glutamate + acetyl-CoA = N-acetyl-L-glutamate + CoA + H(+). Its pathway is amino-acid biosynthesis; L-arginine biosynthesis; L-ornithine and N-acetyl-L-glutamate from L-glutamate and N(2)-acetyl-L-ornithine (cyclic): step 1/1. It participates in amino-acid biosynthesis; L-arginine biosynthesis; N(2)-acetyl-L-ornithine from L-glutamate: step 1/4. Its function is as follows. Catalyzes two activities which are involved in the cyclic version of arginine biosynthesis: the synthesis of acetylglutamate from glutamate and acetyl-CoA, and of ornithine by transacetylation between acetylornithine and glutamate. The polypeptide is Arginine biosynthesis bifunctional protein ArgJ, chloroplastic (Ostreococcus lucimarinus (strain CCE9901)).